The chain runs to 141 residues: Large-conductance mechanosensitive channel (141 aa).

The next 3 helical transmembrane spans lie at 14-34 (VVDL…VNSL), 38-58 (VIMP…YYIP), and 82-102 (GQFL…FMVI).

This sequence belongs to the MscL family. As to quaternary structure, homopentamer.

The protein resides in the cell inner membrane. Channel that opens in response to stretch forces in the membrane lipid bilayer. May participate in the regulation of osmotic pressure changes within the cell. In Methylorubrum extorquens (strain CM4 / NCIMB 13688) (Methylobacterium extorquens), this protein is Large-conductance mechanosensitive channel.